Reading from the N-terminus, the 150-residue chain is 3-hydroxyacyl-[acyl-carrier-protein] dehydratase FabZ (150 aa).

The active site involves histidine 54.

It belongs to the thioester dehydratase family. FabZ subfamily.

The protein resides in the cytoplasm. It carries out the reaction a (3R)-hydroxyacyl-[ACP] = a (2E)-enoyl-[ACP] + H2O. Involved in unsaturated fatty acids biosynthesis. Catalyzes the dehydration of short chain beta-hydroxyacyl-ACPs and long chain saturated and unsaturated beta-hydroxyacyl-ACPs. In Aliivibrio fischeri (strain ATCC 700601 / ES114) (Vibrio fischeri), this protein is 3-hydroxyacyl-[acyl-carrier-protein] dehydratase FabZ.